We begin with the raw amino-acid sequence, 377 residues long: Nitric oxide reductase FlRd-NAD(+) reductase (377 aa).

The protein belongs to the FAD-dependent oxidoreductase family. Requires FAD as cofactor.

It localises to the cytoplasm. The catalysed reaction is 2 reduced [nitric oxide reductase rubredoxin domain] + NAD(+) + H(+) = 2 oxidized [nitric oxide reductase rubredoxin domain] + NADH. The protein operates within nitrogen metabolism; nitric oxide reduction. Its function is as follows. One of at least two accessory proteins for anaerobic nitric oxide (NO) reductase. Reduces the rubredoxin moiety of NO reductase. In Salmonella arizonae (strain ATCC BAA-731 / CDC346-86 / RSK2980), this protein is Nitric oxide reductase FlRd-NAD(+) reductase.